A 222-amino-acid chain; its full sequence is von Willebrand factor C domain-containing protein 2-like (222 aa).

The signal sequence occupies residues 1–21; it reads MALHIHEACILLLVIPGLVTS. 2 consecutive VWFC domains span residues 51-110 and 114-172; these read KGCV…PECK and NFCE…PVCK.

Peripherally associated with AMPAR complex. AMPAR complex consists of an inner core made of 4 pore-forming GluA/GRIA proteins (GRIA1, GRIA2, GRIA3 and GRIA4) and 4 major auxiliary subunits arranged in a twofold symmetry. One of the two pairs of distinct binding sites is occupied either by CNIH2, CNIH3 or CACNG2, CACNG3. The other harbors CACNG2, CACNG3, CACNG4, CACNG8 or GSG1L. This inner core of AMPAR complex is complemented by outer core constituents binding directly to the GluA/GRIA proteins at sites distinct from the interaction sites of the inner core constituents. Outer core constituents include at least PRRT1, PRRT2, CKAMP44/SHISA9, FRRS1L and NRN1. The proteins of the inner and outer core serve as a platform for other, more peripherally associated AMPAR constituents, including VWC2L. Alone or in combination, these auxiliary subunits control the gating and pharmacology of the AMPAR complex and profoundly impact their biogenesis and protein processing. As to expression, predominantly expressed in the brain (at protein level). Also detected in bones, including femur and calvaria, heart, lung and kidney. Isoform 5 is predominant in lung and heart, compared to isoforms 1 and 3. Isoform 4 is expressed in femur and calvaria at higher levels than isoforms 1 and 5. Isoforms 1 and 4 are expressed at higher levels than isoform 5 in kidney and brain.

It is found in the secreted. Its subcellular location is the synapse. In terms of biological role, may play a role in neurogenesis. May promote matrix mineralization, but has been shown to weakly, but significantly inhibit BMP2 and BMP6 activity in a preosteoblastic cell line. This is von Willebrand factor C domain-containing protein 2-like (Vwc2l) from Mus musculus (Mouse).